We begin with the raw amino-acid sequence, 352 residues long: MSASAIATTRHDWSLAEVKALFQQPFNDLLFQAQTMHRAYFDPNRVQVSTLLSIKTGACPEDCKYCPQSGHYNTGLEKQKLMEVQKVLEEAARAKAIGSTRFCMGAAWKHPSAKDMPYVLEMVKGVKAMGLETCMTLGKLDQEQTLALAQAGLDYYNHNLDTSPEFYGSIITTRTYSERLQTLAYVRDAGMKICSGGILGMGESLDDRAGLLIQLANLPEHPESVPINMLVKVAGTPLAEEEDVDPFDFIRMLAVARILMPKSHVRLSAGREQMNEQMQALAFMAGANSIFYGEKLLTTANPQADKDMQLFARLGIKPEAREEHADEVHQAAIEQALVEQRNSELFYDAASA.

The Radical SAM core domain maps to 44-262; the sequence is NRVQVSTLLS…LAVARILMPK (219 aa). [4Fe-4S] cluster is bound by residues C59, C63, and C66. C103, C134, C194, and R266 together coordinate [2Fe-2S] cluster.

It belongs to the radical SAM superfamily. Biotin synthase family. As to quaternary structure, homodimer. The cofactor is [4Fe-4S] cluster. It depends on [2Fe-2S] cluster as a cofactor.

It carries out the reaction (4R,5S)-dethiobiotin + (sulfur carrier)-SH + 2 reduced [2Fe-2S]-[ferredoxin] + 2 S-adenosyl-L-methionine = (sulfur carrier)-H + biotin + 2 5'-deoxyadenosine + 2 L-methionine + 2 oxidized [2Fe-2S]-[ferredoxin]. It participates in cofactor biosynthesis; biotin biosynthesis; biotin from 7,8-diaminononanoate: step 2/2. In terms of biological role, catalyzes the conversion of dethiobiotin (DTB) to biotin by the insertion of a sulfur atom into dethiobiotin via a radical-based mechanism. The polypeptide is Biotin synthase (Pseudomonas entomophila (strain L48)).